A 290-amino-acid polypeptide reads, in one-letter code: Bifunctional protein FolD (290 aa).

NADP(+) is bound by residues 167 to 169, serine 192, and isoleucine 233; that span reads GRS.

Belongs to the tetrahydrofolate dehydrogenase/cyclohydrolase family. In terms of assembly, homodimer.

It carries out the reaction (6R)-5,10-methylene-5,6,7,8-tetrahydrofolate + NADP(+) = (6R)-5,10-methenyltetrahydrofolate + NADPH. It catalyses the reaction (6R)-5,10-methenyltetrahydrofolate + H2O = (6R)-10-formyltetrahydrofolate + H(+). Its pathway is one-carbon metabolism; tetrahydrofolate interconversion. Catalyzes the oxidation of 5,10-methylenetetrahydrofolate to 5,10-methenyltetrahydrofolate and then the hydrolysis of 5,10-methenyltetrahydrofolate to 10-formyltetrahydrofolate. In Azorhizobium caulinodans (strain ATCC 43989 / DSM 5975 / JCM 20966 / LMG 6465 / NBRC 14845 / NCIMB 13405 / ORS 571), this protein is Bifunctional protein FolD.